A 221-amino-acid chain; its full sequence is ATP phosphoribosyltransferase (221 aa).

The protein belongs to the ATP phosphoribosyltransferase family. Short subfamily. As to quaternary structure, heteromultimer composed of HisG and HisZ subunits.

It is found in the cytoplasm. The catalysed reaction is 1-(5-phospho-beta-D-ribosyl)-ATP + diphosphate = 5-phospho-alpha-D-ribose 1-diphosphate + ATP. The protein operates within amino-acid biosynthesis; L-histidine biosynthesis; L-histidine from 5-phospho-alpha-D-ribose 1-diphosphate: step 1/9. In terms of biological role, catalyzes the condensation of ATP and 5-phosphoribose 1-diphosphate to form N'-(5'-phosphoribosyl)-ATP (PR-ATP). Has a crucial role in the pathway because the rate of histidine biosynthesis seems to be controlled primarily by regulation of HisG enzymatic activity. The sequence is that of ATP phosphoribosyltransferase from Anaeromyxobacter sp. (strain K).